A 366-amino-acid polypeptide reads, in one-letter code: METVTVNLVSTPAQRGYPIHIGANILTQPELILDYLDQKRVAIVTNTTVGPLYLEKFRADLSVHGMVSVPIVLPDGEEYKNWETLNLIFDALLTHRCERNTPLIALGGGVVGDLTGFAAATYLRGVPFIQVPTTLLAQVDSSVGGKTGINHPLGKNMIGAFYQPQAVVADTSTLDTLPDRELRAGIAEVIKYGLIRDPAFFDWIESHIELLLRRDNSILTDAIKRSCQHKAEVVEEDERESGMRALLNLGHTFGHAIENAMGYGNWLHGEAVAAGTMLAAEVSRRMGMIGEEDVDRVRNLYVKTGLPVIAPNLGPEKYLHLMGLDKKVQGGKMRFILLENIGRATVHADVPAAILTEVLTECTADA.

NAD(+) is bound by residues 75-80, 109-113, 133-134, lysine 146, lysine 155, and 173-176; these read DGEEYK, GVVGD, TT, and TLDT. Zn(2+) is bound by residues glutamate 188, histidine 251, and histidine 268.

The protein belongs to the sugar phosphate cyclases superfamily. Dehydroquinate synthase family. It depends on Co(2+) as a cofactor. The cofactor is Zn(2+). NAD(+) is required as a cofactor.

It localises to the cytoplasm. It carries out the reaction 7-phospho-2-dehydro-3-deoxy-D-arabino-heptonate = 3-dehydroquinate + phosphate. Its pathway is metabolic intermediate biosynthesis; chorismate biosynthesis; chorismate from D-erythrose 4-phosphate and phosphoenolpyruvate: step 2/7. Its function is as follows. Catalyzes the conversion of 3-deoxy-D-arabino-heptulosonate 7-phosphate (DAHP) to dehydroquinate (DHQ). The polypeptide is 3-dehydroquinate synthase (Nitrosospira multiformis (strain ATCC 25196 / NCIMB 11849 / C 71)).